The primary structure comprises 24 residues: Coenzyme PQQ synthesis protein A (24 aa).

A cross-link (pyrroloquinoline quinone (Glu-Tyr)) is located at residues 16-20 (EITMY).

Belongs to the PqqA family.

It functions in the pathway cofactor biosynthesis; pyrroloquinoline quinone biosynthesis. In terms of biological role, required for coenzyme pyrroloquinoline quinone (PQQ) biosynthesis. PQQ is probably formed by cross-linking a specific glutamate to a specific tyrosine residue and excising these residues from the peptide. The protein is Coenzyme PQQ synthesis protein A of Variovorax paradoxus (strain S110).